We begin with the raw amino-acid sequence, 1595 residues long: MEKIFFNYPFNKGKLKTLLIWSILNTGQYNMINLVENLKKVGFQYATTAGISLGIDDLKTISTKYDLIEKTNDNIKDITNHLNLAVLNEVEHSQKLINSWQKISEILKININKKFKTVNKLNPIYMMAFSGARGNISQVRQLIGMRGLMADPNGQIIHLPIKSNFREGLTVTEYLISCYGARKGVVDTALRTATAGYLTRRLVDTAQHVIISQLDCGTKQGIFLSNLYQGTDILLALKDQLYGRVLGKDIKINSLMYLKNQQIDDSLSILLANHLKRVFIRSPLTCKASNSTLCQLCYGWNLSHSKLISLGEIVGVIAAQSIGEPGTQLTMRTFHTGGVFSGNVKSQLYSPFDGIVEYSSSLYGDIVNLYNGNFAFLVKRKGLIIINPIIKKIKPKKFEAILYTLVFVKNNEKVKKNQLIAQQSNKISNTQQIEGKYTVNSKLEGEILFDENHLSTNKKKIWILHGKIYKSVFPLQLFPKKNDFLSYKFPLAQAKLLNLSASFLKVCVVRKKRHFIKDNISQSNEILLFTEYPLYKFLIKNIKNYHQFQFFYPIQNKIKEVEKSLRINNKVIKDNRIKIPFNSIAKSKLLNLLNKRLEQNTFFSKNTFSNYYENTDERTTWFTQNSILKYNAIYFYKSSKSVEAKTSRKIPITFNSKNFLIKEKLFFIKNNSVLLPIFSSDFFTKFTLKNEYFKPKHNIQRKLGFLSPTSYFKYISNNYFLKYLNFYQKHISVEMNDIIKVKLYYKQEFEEKTNFKKQNLHKIDSKINLFMNKLILVIEHLILTKLFSTKINNINYLLFYFNYLKYLKESNKFTIFYCNKKKETIFDLLFLLKTLNTTSNLIILAENKISTKLLSEFIYQTIYLIKNNITINSTNSVLENFNYFQQRKEDLFQHRNIFEKVPNFSGKRFSNLSLNINNENYSISKAENKMLIQDLLTLTILNNNIKYFNSHKSFLDKRFFYNESLPIPKILKDFTSILNRINFWSFSSSQFYKKHFLFALKTDNLINIKNKNFIFISRIPQIQAVNFALKKSLKSSFDLKSYEILQYNLKFPLGFYSLIKMIIEERSLFDIDYFQKFIIQYKNFSFHLINKKLKNIFTNNSYGSFTDESTLLESKYFNKRRPTKTTFSKLMNQIKFKFFIKVPLLLSTFSKKDTVLFNIFITNKKENFRNYKIVNMLTNDFYKNLNLQTHSSEKNSQLKLSSKNLEIFNLFYTSSIINVIMKKSITNFNKNFFIDNLFQFSKTHFNWLPKWDTIVRIQFLSPYQGEIIAQNIVKYSGYKTLYNHLMILTKNEKLQVSIFRNKNQETIIKKDTKNYFITKPHCCKIYPKFGSLIYSTSQVSPGKKINQSGQIIEKSNSFLVLRKGTPLLSPITGIFYVWNGDFVSQGSPIMTLLYNKLKTGDIVQGIPKIEHFFEARKGNVDLIQTNLYIKLLAFFKKYNKTLSEYRAVKRSILKIQKIIIDGVCRVYCSQGILVSRKHFEVIVKQMTSKVKIVNGGETGLLEGEFINFQKLEKINTNLYHRRVVYEPLVLGITKVSLRTESFISSASFQETTKVLSQAALEKRIDFLNGLKENVILGKLIPGGTGLIVKIITNKI.

Zn(2+) is bound by residues Cys-216, Cys-286, Cys-294, and Cys-297.

This sequence belongs to the RNA polymerase beta' chain family. RpoC2 subfamily. In plastids the minimal PEP RNA polymerase catalytic core is composed of four subunits: alpha, beta, beta', and beta''. When a (nuclear-encoded) sigma factor is associated with the core the holoenzyme is formed, which can initiate transcription. It depends on Zn(2+) as a cofactor.

It is found in the plastid. It localises to the chloroplast. It carries out the reaction RNA(n) + a ribonucleoside 5'-triphosphate = RNA(n+1) + diphosphate. DNA-dependent RNA polymerase catalyzes the transcription of DNA into RNA using the four ribonucleoside triphosphates as substrates. This Bigelowiella natans (Pedinomonas minutissima) protein is DNA-directed RNA polymerase subunit beta''.